The following is a 317-amino-acid chain: tRNA dimethylallyltransferase (317 aa).

An ATP-binding site is contributed by 14–21 (GPTASGKS). Residue 16–21 (TASGKS) participates in substrate binding. Interaction with substrate tRNA regions lie at residues 39-42 (DSVL) and 163-167 (QRIQR).

The protein belongs to the IPP transferase family. Monomer. The cofactor is Mg(2+).

It carries out the reaction adenosine(37) in tRNA + dimethylallyl diphosphate = N(6)-dimethylallyladenosine(37) in tRNA + diphosphate. Functionally, catalyzes the transfer of a dimethylallyl group onto the adenine at position 37 in tRNAs that read codons beginning with uridine, leading to the formation of N6-(dimethylallyl)adenosine (i(6)A). The chain is tRNA dimethylallyltransferase from Xylella fastidiosa (strain M23).